The chain runs to 204 residues: Vacuolar protein-sorting-associated protein 46 (204 aa).

Residues 1–103 (MSRNSAAGLE…ASMGQVCKGM (103 aa)) form an interaction with VSP24 region. At Ser5 the chain carries Phosphoserine. 2 coiled-coil regions span residues 9–56 (LENT…RIYA) and 109–129 (NMNL…FEDL). Residues 104–204 (DKALQNMNLQ…LAQRLRALRG (101 aa)) are interaction with VSP4. The tract at residues 176 to 204 (NVPEIKAKEVNVDDEKEDKLAQRLRALRG) is interaction with VTA1. Residues 185–196 (VNVDDEKEDKLA) show a composition bias toward basic and acidic residues. Residues 185-204 (VNVDDEKEDKLAQRLRALRG) are disordered.

The protein belongs to the SNF7 family. In terms of assembly, self-associates. Interacts with VPS4 and VTA1. Interacts with IST1.

The protein resides in the endosome membrane. The protein localises to the endomembrane system. Functionally, class E VPS protein implicated in concentration and sorting of cargo proteins of the multivesicular body (MVB) for incorporation into intralumenal vesicles. The lumenal sequestrated membrane proteins will be targeted into the vacuole after fusion of the endosome with the vacuole. Probably acts as a peripherally associated component of the ESCRT-III complex, which appears to be critical for late steps in MVB sorting, such as membrane invagination and final cargo sorting and recruits late-acting components of the sorting machinery. The MVB pathway requires the sequential function of ESCRT-O, -I,-II and -III complex assemblies. Regulates the membrane association of VPS4. Can stimulate VPS4 ATPase activity directly or via VTA1. This chain is Vacuolar protein-sorting-associated protein 46 (DID2), found in Saccharomyces cerevisiae (strain ATCC 204508 / S288c) (Baker's yeast).